Reading from the N-terminus, the 968-residue chain is Catenin delta-1 (968 aa).

An N-acetylmethionine modification is found at M1. The necessary and sufficient for interaction with CCDC85B stretch occupies residues 1 to 357 (MDDSEVESTA…ASLDSLRKGG (357 aa)). The residue at position 4 (S4) is a Phosphoserine. Positions 10 to 46 (ASILASVKEQEAQFEKLTRALEEERRHVSAQLERVRV) form a coiled coil. Position 47 is a phosphoserine (S47). The residue at position 59 (T59) is a Phosphothreonine. A Phosphotyrosine; by FYN modification is found at Y112. The residue at position 125 (S125) is a Phosphoserine. Y217 and Y221 each carry phosphotyrosine. S225 bears the Phosphoserine mark. Y228 is modified (phosphotyrosine). 2 positions are modified to phosphoserine: S230 and S252. At Y257 the chain carries Phosphotyrosine. S268 and S269 each carry phosphoserine. A Phosphotyrosine modification is found at Y280. The residue at position 288 (S288) is a Phosphoserine; by PAK5. A Phosphotyrosine modification is found at Y291. Positions 299 to 306 (MSDYGTAR) match the Nuclear localization signal (NLS) motif. Position 300 is a phosphoserine (S300). Phosphothreonine is present on T304. A phosphoserine mark is found at S320, S346, S349, and S352. ARM repeat units follow at residues 358–395 (PPPP…HLCY), 398–437 (DKVK…NISF), 441–475 (QDNK…ITGT), and 476–516 (LWNL…NEDC). A Glycyl lysine isopeptide (Lys-Gly) (interchain with G-Cter in SUMO2) cross-link involves residue K421. Residue K517 forms a Glycyl lysine isopeptide (Lys-Gly) (interchain with G-Cter in SUMO2) linkage. The Nuclear localization signal (NLS) motif lies at 521–528 (IEWESVLT). ARM repeat units lie at residues 534–573 (LRNV…DSDS), 583–624 (LRNL…AKKG), 653–693 (ARGY…NLCA), 700–739 (RYIR…NLAV), 740–780 (DARN…SILN), and 781–826 (TINE…ALVL). Residues I566, D572, S587, and E593 each carry the phosphothreonine modification. The Nuclear localization signal (NLS) signature appears at 568 to 575 (QKDSDSKL). Phosphoserine is present on S617. The Nuclear localization signal (NLS) signature appears at 622 to 629 (KKGKDEWF). S713 is modified (phosphoserine). E788, K794, and N809 each carry phosphothreonine. S811 carries the phosphoserine modification. S815, L835, and K841 each carry phosphothreonine. A Phosphoserine modification is found at S847. The disordered stretch occupies residues 855 to 944 (NASRSQSSHS…LMQDEGQESL (90 aa)). A856 is subject to Phosphothreonine. Phosphoserine is present on residues S857, S859, and S861. S862 is subject to Phosphothreonine. Residue S864 is modified to Phosphoserine. Y865 is subject to Phosphotyrosine. S868 carries the post-translational modification Phosphoserine. T869 carries the phosphothreonine modification. A compositionally biased stretch (basic and acidic residues) spans 875–888 (RNQKSDKKPDREEI). S879 is subject to Phosphoserine. K882 participates in a covalent cross-link: Glycyl lysine isopeptide (Lys-Gly) (interchain with G-Cter in SUMO2). 2 positions are modified to phosphothreonine: Q889 and S895. A compositionally biased stretch (polar residues) spans 889 to 908 (QMSNMGSNTKSLDNNYSTPN). S899 is subject to Phosphoserine. Y904 carries the phosphotyrosine modification. 3 positions are modified to phosphothreonine: T906, R910, and T916. Positions 909–922 (ERGDHNRTLDRSGD) are enriched in basic and acidic residues. A phosphoserine mark is found at S920 and S943.

The protein belongs to the beta-catenin family. Belongs to a multiprotein cell-cell adhesion complex that also contains E-cadherin/CDH1, alpha-catenin/CTNNA1, beta-catenin/CTNNB1, and gamma-catenin/JUP. Component of a cadherin:catenin adhesion complex composed of at least of CDH26, beta-catenin/CTNNB1, alpha-catenin/CTNNA1 and p120 catenin/CTNND1. Binds to the C-terminal fragment of PSEN1 and mutually competes for CDH1. Interacts with ZBTB33. Interacts with GLIS2. Interacts with FER. Interacts with NANOS1 (via N-terminal region). Interacts (via N-terminus) with GNA12; the interaction regulates CDH1-mediated cell-cell adhesion. Interacts with GNA13. Interacts with CCDC85B. Interacts with PLPP3; negatively regulates the PLPP3-mediated stabilization of CTNNB1. Interacts with DSG3; the interaction facilitates DSG3 localization and retention at cell-cell junctions. Interacts with CTNND1/p120-catenin; the interaction controls CADH5 endocytosis. Post-translationally, phosphorylated by FER and other protein-tyrosine kinases. Phosphorylated at Ser-288 by PAK5. Dephosphorylated by PTPRJ. In terms of tissue distribution, expressed in vascular endothelium. Melanocytes and melanoma cells primarily express the long isoform 1A, whereas keratinocytes express shorter isoforms, especially 3A. The shortest isoform 4A, is detected in normal keratinocytes and melanocytes, and generally lost from cells derived from squamous cell carcinomas or melanomas. The C-terminal alternatively spliced exon B is present in the p120ctn transcripts in the colon, intestine and prostate, but lost in several tumor tissues derived from these organs.

The protein localises to the cell junction. It localises to the adherens junction. Its subcellular location is the cytoplasm. The protein resides in the nucleus. It is found in the cell membrane. Its function is as follows. Key regulator of cell-cell adhesion that associates with and regulates the cell adhesion properties of both C-, E- and N-cadherins, being critical for their surface stability. Promotes localization and retention of DSG3 at cell-cell junctions, via its interaction with DSG3. Beside cell-cell adhesion, regulates gene transcription through several transcription factors including ZBTB33/Kaiso2 and GLIS2, and the activity of Rho family GTPases and downstream cytoskeletal dynamics. Implicated both in cell transformation by SRC and in ligand-induced receptor signaling through the EGF, PDGF, CSF-1 and ERBB2 receptors. This chain is Catenin delta-1, found in Homo sapiens (Human).